The chain runs to 447 residues: Tubulin beta chain (447 aa).

Residues Gln11, Glu69, Ser138, Gly142, Thr143, Gly144, Asn204, and Asn226 each contribute to the GTP site. Glu69 is a binding site for Mg(2+).

Belongs to the tubulin family. In terms of assembly, dimer of alpha and beta chains. A typical microtubule is a hollow water-filled tube with an outer diameter of 25 nm and an inner diameter of 15 nM. Alpha-beta heterodimers associate head-to-tail to form protofilaments running lengthwise along the microtubule wall with the beta-tubulin subunit facing the microtubule plus end conferring a structural polarity. Microtubules usually have 13 protofilaments but different protofilament numbers can be found in some organisms and specialized cells. It depends on Mg(2+) as a cofactor.

It localises to the cytoplasm. Its subcellular location is the cytoskeleton. Functionally, tubulin is the major constituent of microtubules, a cylinder consisting of laterally associated linear protofilaments composed of alpha- and beta-tubulin heterodimers. Microtubules grow by the addition of GTP-tubulin dimers to the microtubule end, where a stabilizing cap forms. Below the cap, tubulin dimers are in GDP-bound state, owing to GTPase activity of alpha-tubulin. This chain is Tubulin beta chain, found in Trichophyton rubrum (Athlete's foot fungus).